The following is a 423-amino-acid chain: 3-phosphoshikimate 1-carboxyvinyltransferase (423 aa).

Residues K21, S22, and R26 each contribute to the 3-phosphoshikimate site. Phosphoenolpyruvate is bound at residue K21. 2 residues coordinate phosphoenolpyruvate: G92 and R120. The 3-phosphoshikimate site is built by S164, Q166, D312, and K339. Position 166 (Q166) interacts with phosphoenolpyruvate. D312 functions as the Proton acceptor in the catalytic mechanism. The phosphoenolpyruvate site is built by R343 and R385.

It belongs to the EPSP synthase family. Monomer.

The protein resides in the cytoplasm. The enzyme catalyses 3-phosphoshikimate + phosphoenolpyruvate = 5-O-(1-carboxyvinyl)-3-phosphoshikimate + phosphate. It functions in the pathway metabolic intermediate biosynthesis; chorismate biosynthesis; chorismate from D-erythrose 4-phosphate and phosphoenolpyruvate: step 6/7. Its function is as follows. Catalyzes the transfer of the enolpyruvyl moiety of phosphoenolpyruvate (PEP) to the 5-hydroxyl of shikimate-3-phosphate (S3P) to produce enolpyruvyl shikimate-3-phosphate and inorganic phosphate. The chain is 3-phosphoshikimate 1-carboxyvinyltransferase from Thermoanaerobacter pseudethanolicus (strain ATCC 33223 / 39E) (Clostridium thermohydrosulfuricum).